We begin with the raw amino-acid sequence, 179 residues long: Repressor of phase 1 flagellin gene (179 aa).

Functionally, transcriptional repressor of the FliC phase-1 flagellin. The protein is Repressor of phase 1 flagellin gene (fljA) of Salmonella typhimurium (strain LT2 / SGSC1412 / ATCC 700720).